A 200-amino-acid chain; its full sequence is Imidazole glycerol phosphate synthase subunit HisH (200 aa).

The Glutamine amidotransferase type-1 domain maps to 3 to 200 (DLALIDAGGA…LRNFLEMSFP (198 aa)). The active-site Nucleophile is Cys-78. Residues His-179 and Glu-181 contribute to the active site.

In terms of assembly, heterodimer of HisH and HisF.

It localises to the cytoplasm. It carries out the reaction 5-[(5-phospho-1-deoxy-D-ribulos-1-ylimino)methylamino]-1-(5-phospho-beta-D-ribosyl)imidazole-4-carboxamide + L-glutamine = D-erythro-1-(imidazol-4-yl)glycerol 3-phosphate + 5-amino-1-(5-phospho-beta-D-ribosyl)imidazole-4-carboxamide + L-glutamate + H(+). The enzyme catalyses L-glutamine + H2O = L-glutamate + NH4(+). It functions in the pathway amino-acid biosynthesis; L-histidine biosynthesis; L-histidine from 5-phospho-alpha-D-ribose 1-diphosphate: step 5/9. IGPS catalyzes the conversion of PRFAR and glutamine to IGP, AICAR and glutamate. The HisH subunit catalyzes the hydrolysis of glutamine to glutamate and ammonia as part of the synthesis of IGP and AICAR. The resulting ammonia molecule is channeled to the active site of HisF. In Xanthomonas campestris pv. campestris (strain 8004), this protein is Imidazole glycerol phosphate synthase subunit HisH.